Here is a 215-residue protein sequence, read N- to C-terminus: UPF0502 protein YceH (215 aa).

Lys-80 carries the post-translational modification N6-acetyllysine.

The protein belongs to the UPF0502 family.

In Escherichia coli O7:K1 (strain IAI39 / ExPEC), this protein is UPF0502 protein YceH.